The primary structure comprises 65 residues: Protein YSY6 (65 aa).

Residues 45 to 65 form a helical membrane-spanning segment; the sequence is LGILLFLLVGGGVLQLISYIL.

This sequence belongs to the RAMP4 family.

It is found in the membrane. The protein localises to the endoplasmic reticulum membrane. Interacts with target proteins during their translocation into the lumen of the endoplasmic reticulum. Protects unfolded target proteins against degradation during ER stress. May facilitate glycosylation of target proteins after termination of ER stress. This Saccharomyces cerevisiae (strain ATCC 204508 / S288c) (Baker's yeast) protein is Protein YSY6 (YSY6).